Reading from the N-terminus, the 847-residue chain is MMRVHTHTRLCFLCVLTLLYHQCSHCHEGGSHHHHGHNHGDHDHIHSDLQISEMSCNGLSDRLVHGSQGEPAENEQRYYIHQLFCRYGQKDRLDFKGFQSLLLSLGLGEVRVVGLEHEDLGHDHVAHLDILEVQDGRHSHSAGHPHSHQNPNISHKTHQHSHHENEEHTLAEDVPCSKTLGTGATPPSVSEEHDHDHEHDHDHDKDSDHEHNHRHVTDSPQTQDHEHDHIHLHTHSHKQDSDVTQRLELDHDQKSREHAQEHNDLSDQNHHHHDHHHHKHPHPHLHAPESVVHTTSAMPKIQPSVPPELPANQTRRHRRPSKVKAHRGRNRTSVTVTQAVELETSGDDHEHSLQDHSPAQQQRGRREVPGSPAHGVLHQHEECLNLTQLLHQYGLSSDSLISPVQFTYLCPALLYQIDRRFCILHYHHVEAEEQVAPSSGWVWMWGFVSITIISLLSLLGVVLVPILNQSCFKFLLTFLVALAVGTLSGDALLHLLPHSQGDHDHNHGEQMEEEPEVDFLIKFDGVWKGLTALAGIYLLFIIEHCIGMFKHYSDQRGGLCHKKKKGEQAKIGRKLSDHKLNRRSDAEWLHLKPLTEGDGTTCEAGHNDTQMTELQPLDSPSKMPLNISDSDHPYEAPVKTEEDNVPKAKSKKHGHGHGHGHGHGHGHSHHGHCHSDQEMKDAGIASIAWMVIMGDGMHNFSDGLAIGAAFSANITGGISTSVAVFCHELPHELGDFAVLLKAGMSVKQAIVYNLLSALMAYAGMVIGTAVGQYTHNVTSWIFAVTAGMFLYVALVDMLPEMLHGDSEEHKRCEMGHFVLQNFGMLTGFGIMLLIAIFEDHIVLDFGF.

The first 26 residues, 1–26, serve as a signal peptide directing secretion; the sequence is MMRVHTHTRLCFLCVLTLLYHQCSHC. The interval 136-374 is disordered; the sequence is GRHSHSAGHP…RREVPGSPAH (239 aa). A compositionally biased stretch (basic and acidic residues) spans 162 to 171; sequence HHENEEHTLA. A compositionally biased stretch (polar residues) spans 179–188; the sequence is TLGTGATPPS. A compositionally biased stretch (basic and acidic residues) spans 190 to 269; that stretch reads SEEHDHDHEH…QEHNDLSDQN (80 aa). Basic residues-rich tracts occupy residues 270–285 and 314–330; these read HHHH…HPHL and TRRH…RGRN. The N-linked (GlcNAc...) asparagine glycan is linked to Asn385. Helical transmembrane passes span 447-467, 474-494, and 529-549; these read FVSI…VPIL, FLLT…ALLH, and GLTA…IGMF. The segment at 613–676 is disordered; it reads ELQPLDSPSK…HSHHGHCHSD (64 aa). Residues 629–646 are compositionally biased toward basic and acidic residues; that stretch reads DSDHPYEAPVKTEEDNVP. Basic residues predominate over residues 648-672; sequence AKSKKHGHGHGHGHGHGHGHSHHGH. A run of 4 helical transmembrane segments spans residues 705–725, 750–770, 779–799, and 817–837; these read AIGA…VAVF, IVYN…GTAV, SWIF…DMLP, and FVLQ…IAIF.

Belongs to the ZIP transporter (TC 2.A.5) family. Post-translationally, undergoes N-terminal ectodomain shedding.

The protein resides in the cell membrane. It localises to the apical cell membrane. The catalysed reaction is Zn(2+)(in) = Zn(2+)(out). In terms of biological role, zinc-influx transporter. When associated with slc39a6, the heterodimer slc39a10/slc39a6 has a functional role in epithelial-mesenchymal transition (EMT) during embryonic development. Slc39a10/slc39a6 heterodimers play also an essentiel role in initiating mitosis by importing zinc into cells to initiate a pathway resulting in the onset of mitosis. When associated with slc39a6, the heterodimer controls Ncam1 phosphorylation and integration into focal adhesion complexes during EMT. This Danio rerio (Zebrafish) protein is Zinc transporter ZIP10.